The primary structure comprises 444 residues: Glucarate dehydratase (444 aa).

The substrate site is built by H30, T101, Y148, and K203. The active-site Proton acceptor is the K205. Mg(2+)-binding residues include D233, E264, and N287. D233–N235 contributes to the substrate binding site. Substrate contacts are provided by residues N287, H337 to N339, H366, and R420. H337 functions as the Proton acceptor in the catalytic mechanism.

The protein belongs to the mandelate racemase/muconate lactonizing enzyme family. GlucD subfamily. It depends on Mg(2+) as a cofactor.

It carries out the reaction D-glucarate = 5-dehydro-4-deoxy-D-glucarate + H2O. It participates in carbohydrate acid metabolism; D-glucarate degradation; 2,5-dioxopentanoate from D-glucarate: step 1/2. Catalyzes the dehydration of glucarate to 5-keto-4-deoxy-D-glucarate (5-kdGluc). The polypeptide is Glucarate dehydratase (gudD) (Acinetobacter baylyi (strain ATCC 33305 / BD413 / ADP1)).